A 770-amino-acid polypeptide reads, in one-letter code: DNA topoisomerase 1 (770 aa).

Residues 4 to 140 (FRIIIAEKAD…EIRRAKFSAL (137 aa)) form the Toprim domain. Glu10 and Asp109 together coordinate Mg(2+). Positions 156 to 563 (NYSLADAADA…ESKKMLHEVL (408 aa)) constitute a Topo IA-type catalytic domain. The interval 194–199 (SAGRVQ) is interaction with DNA. The active-site O-(5'-phospho-DNA)-tyrosine intermediate is the Tyr312. 3 consecutive C4-type zinc fingers follow at residues 611-638 (CEDP…CPVC), 673-700 (CPAD…YPKC), and 719-744 (CPYC…NMQC).

The protein belongs to the type IA topoisomerase family. In terms of assembly, monomer. Requires Mg(2+) as cofactor.

It carries out the reaction ATP-independent breakage of single-stranded DNA, followed by passage and rejoining.. Releases the supercoiling and torsional tension of DNA, which is introduced during the DNA replication and transcription, by transiently cleaving and rejoining one strand of the DNA duplex. Introduces a single-strand break via transesterification at a target site in duplex DNA. The scissile phosphodiester is attacked by the catalytic tyrosine of the enzyme, resulting in the formation of a DNA-(5'-phosphotyrosyl)-enzyme intermediate and the expulsion of a 3'-OH DNA strand. The free DNA strand then undergoes passage around the unbroken strand, thus removing DNA supercoils. Finally, in the religation step, the DNA 3'-OH attacks the covalent intermediate to expel the active-site tyrosine and restore the DNA phosphodiester backbone. The protein is DNA topoisomerase 1 of Thermoplasma acidophilum (strain ATCC 25905 / DSM 1728 / JCM 9062 / NBRC 15155 / AMRC-C165).